Consider the following 542-residue polypeptide: Beta-amylase 2, chloroplastic (542 aa).

The N-terminal 55 residues, 1-55 (MAIRLNHSVIPVSVKLGAPTRVSARSSLPFSVGDWRGVSTFSGARPLVLAKVKLR), are a transit peptide targeting the chloroplast. Substrate is bound by residues D136, H176, and D184. The active-site Proton donor is the E269. K377, H382, and T424 together coordinate substrate. E465 functions as the Proton acceptor in the catalytic mechanism. Residues 466 to 467 (NA) and R501 contribute to the substrate site.

It belongs to the glycosyl hydrolase 14 family.

It localises to the plastid. Its subcellular location is the chloroplast. The enzyme catalyses Hydrolysis of (1-&gt;4)-alpha-D-glucosidic linkages in polysaccharides so as to remove successive maltose units from the non-reducing ends of the chains.. Its activity is regulated as follows. Redox regulation; active in reducing conditions, inactive in oxidizing conditions. Its function is as follows. Low beta-amylase activity. Interacts poorly with starch or other alpha-1,4-glucan. The polypeptide is Beta-amylase 2, chloroplastic (BAM2) (Arabidopsis thaliana (Mouse-ear cress)).